Reading from the N-terminus, the 124-residue chain is uncharacterized protein (124 aa).

The disordered stretch occupies residues 1 to 28; that stretch reads MGTSLRSQSFREPRPSYGRLHESQGRSL. A compositionally biased stretch (basic and acidic residues) spans 9–28; it reads SFREPRPSYGRLHESQGRSL.

This is an uncharacterized protein from Mus musculus (Mouse).